Here is a 2036-residue protein sequence, read N- to C-terminus: Proline-rich protein 12 (2036 aa).

Disordered stretches follow at residues 210 to 283 (GGGV…RALP), 331 to 587 (CSPL…GAPG), and 649 to 697 (APSP…DPQR). A compositionally biased stretch (pro residues) spans 223–240 (QTPPYRPGPPDPPPPPRH). The span at 249–258 (ASSSAAAAAA) shows a compositional bias: low complexity. Residues serine 332 and serine 340 each carry the phosphoserine modification. A compositionally biased stretch (low complexity) spans 340 to 365 (SPGAGEPSKAGPSGATAGASGRATGP). Gly residues-rich tracts occupy residues 367–380 (AAGG…GGGY) and 391–400 (TGKGGYGAAA). 2 stretches are compositionally biased toward low complexity: residues 411–432 (STAT…TGKA) and 441–458 (QAYS…QAYG). Over residues 479–490 (PPQPPSGPPPPG) the composition is skewed to pro residues. 2 stretches are compositionally biased toward polar residues: residues 493–504 (TCQSYSPDQLQG) and 523–537 (GLPT…STGH). The segment covering 543-558 (GHGGGWGPSSLGGGGE) has biased composition (gly residues). Serine 651 is modified (phosphoserine). The segment covering 673–683 (GLGGSGGAGGP) has biased composition (gly residues). Position 738 is a phosphothreonine (threonine 738). Disordered regions lie at residues 758 to 850 (AFLQ…PLQL), 859 to 878 (LEPA…DPPG), 886 to 925 (ALEP…KAPR), and 952 to 1068 (EMFG…CSTK). Low complexity predominate over residues 802-817 (LPSVLSHAPSPSPSAS). Residues 833–847 (PQPPPPPPPPPPPMP) show a composition bias toward pro residues. Residue serine 865 is modified to Phosphoserine. A compositionally biased stretch (pro residues) spans 1037–1052 (AAPPPPPPPPPPPAPA). 2 positions are modified to phosphoserine: serine 1077 and serine 1135. Disordered stretches follow at residues 1120–1260 (RLPD…SLTR), 1294–1347 (RHPP…GGAL), 1376–1573 (TLPS…GEGI), and 1668–1840 (HRPP…PGRL). A compositionally biased stretch (low complexity) spans 1182–1194 (PTTAGPASASTPT). Residues 1199-1208 (KPRGRGRGRG) are compositionally biased toward basic residues. Basic and acidic residues predominate over residues 1209–1223 (RKAEEAGGTRLEPLK). The residue at position 1223 (lysine 1223) is an N6-acetyllysine. Polar residues predominate over residues 1239–1257 (GTSSGDAISGTDHNSLDSS). Threonine 1304 carries the post-translational modification Phosphothreonine. Pro residues-rich tracts occupy residues 1306 to 1317 (PLSPPKSVPPSV) and 1324 to 1338 (PQPP…PPPS). Serine 1308 carries the phosphoserine modification. Serine 1381, serine 1382, and serine 1387 each carry phosphoserine. Pro residues-rich tracts occupy residues 1420-1438 (DGPP…PLPG) and 1458-1535 (PPTP…APSP). A compositionally biased stretch (basic and acidic residues) spans 1541 to 1553 (PDTRPLHLAKKQE). Threonine 1561 is modified (phosphothreonine). The residue at position 1568 (serine 1568) is a Phosphoserine. The span at 1691–1703 (APPPKAPAPPPKP) shows a compositional bias: pro residues. Basic and acidic residues-rich tracts occupy residues 1704-1715 (ETPEKTTSEKPP) and 1737-1769 (PVEK…RPER). At threonine 1705 the chain carries Phosphothreonine. Residues 1817–1829 (GSSSDSESSPGAP) show a composition bias toward low complexity. Phosphoserine is present on serine 1925.

The protein resides in the nucleus. It is found in the postsynaptic density. It localises to the synapse. The protein localises to the synaptosome. The sequence is that of Proline-rich protein 12 from Homo sapiens (Human).